The following is a 477-amino-acid chain: Histidine permease HisP (477 aa).

Transmembrane regions (helical) follow at residues isoleucine 16–threonine 36, alanine 40–methionine 60, proline 86–valine 106, isoleucine 126–phenylalanine 146, isoleucine 156–leucine 176, histidine 192–phenylalanine 212, serine 238–isoleucine 258, isoleucine 284–serine 304, isoleucine 337–glycine 359, leucine 364–isoleucine 386, tryptophan 408–aspartate 428, and tryptophan 437–tyrosine 457.

This sequence belongs to the amino acid-polyamine-organocation (APC) superfamily. Amino acid transporter (AAT) (TC 2.A.3.1) family.

The protein localises to the cell membrane. In terms of biological role, involved in histidine uptake. Has low affinity for arginine and lysine. Plays no significant role in the excretion of accumulated histidine. The chain is Histidine permease HisP from Lactococcus lactis subsp. cremoris (strain MG1363).